A 273-amino-acid polypeptide reads, in one-letter code: MSQGYLQFPNIDPVLVSIGPVSIRWYGLMYLVGFMFALWLANRRADKPGSGWTREQVSDLLFAGFLGVVIGGRVGYVIFYNFELFLDDPLYLFKVWTGGMSFHGGLLGVITAMFWYAHKNGRTFFGVADFVAPLVPFGLGMGRMGNFMNSELWGRVTDVPWAIVFPNGGPLPRHPSQLYEMLLEGVVLFFILNWFIKKPRPLGSVSGLFLAGYGTFRFLVEFVREPDAQLGLFGGYISMGQILSMPMIVLGILMMVWAYKRGLYQDKAQVKTK.

7 helical membrane-spanning segments follow: residues 21–41 (VSIR…LWLA), 60–80 (LLFA…VIFY), 95–115 (VWTG…AMFW), 124–144 (FFGV…MGRM), 176–196 (SQLY…NWFI), 203–223 (GSVS…VEFV), and 237–257 (ISMG…MMVW). Position 143 (R143) interacts with a 1,2-diacyl-sn-glycero-3-phospho-(1'-sn-glycerol).

Belongs to the Lgt family.

The protein localises to the cell inner membrane. The enzyme catalyses L-cysteinyl-[prolipoprotein] + a 1,2-diacyl-sn-glycero-3-phospho-(1'-sn-glycerol) = an S-1,2-diacyl-sn-glyceryl-L-cysteinyl-[prolipoprotein] + sn-glycerol 1-phosphate + H(+). Its pathway is protein modification; lipoprotein biosynthesis (diacylglyceryl transfer). Its function is as follows. Catalyzes the transfer of the diacylglyceryl group from phosphatidylglycerol to the sulfhydryl group of the N-terminal cysteine of a prolipoprotein, the first step in the formation of mature lipoproteins. In Vibrio parahaemolyticus serotype O3:K6 (strain RIMD 2210633), this protein is Phosphatidylglycerol--prolipoprotein diacylglyceryl transferase.